Reading from the N-terminus, the 602-residue chain is Chaperone protein dnaK (602 aa).

It belongs to the heat shock protein 70 family.

The protein resides in the plastid. It localises to the chloroplast. In terms of biological role, acts as a chaperone. In Thalassiosira pseudonana (Marine diatom), this protein is Chaperone protein dnaK.